Consider the following 589-residue polypeptide: Threonine--tRNA ligase (589 aa).

The interval 191–487 (DHRKIGKNLG…LLEQTKGNFP (297 aa)) is catalytic. Residues C284, H335, and H464 each contribute to the Zn(2+) site.

The protein belongs to the class-II aminoacyl-tRNA synthetase family. In terms of assembly, homodimer. Zn(2+) is required as a cofactor.

The protein resides in the cytoplasm. The catalysed reaction is tRNA(Thr) + L-threonine + ATP = L-threonyl-tRNA(Thr) + AMP + diphosphate + H(+). Catalyzes the attachment of threonine to tRNA(Thr) in a two-step reaction: L-threonine is first activated by ATP to form Thr-AMP and then transferred to the acceptor end of tRNA(Thr). Also edits incorrectly charged L-seryl-tRNA(Thr). This is Threonine--tRNA ligase from Mycoplasmopsis pulmonis (strain UAB CTIP) (Mycoplasma pulmonis).